Reading from the N-terminus, the 349-residue chain is Dipeptide transport ATP-binding protein DppD (349 aa).

Positions 7-258 (LEVKNLHVNF…PQHPYTWGLL (252 aa)) constitute an ABC transporter domain. 43–50 (GESGSGKS) lines the ATP pocket.

The protein belongs to the ABC transporter superfamily. As to quaternary structure, the complex is composed of two ATP-binding proteins (DppD and DppF), two transmembrane proteins (DppB and DppC) and a solute-binding protein (DppA).

The protein localises to the cell membrane. The catalysed reaction is a dipeptide(out) + ATP + H2O = a dipeptide(in) + ADP + phosphate + H(+). Its function is as follows. Part of the ABC transporter DppABCDF involved in dipeptide transport. Responsible for energy coupling to the transport system. The polypeptide is Dipeptide transport ATP-binding protein DppD (Lactococcus lactis subsp. cremoris (strain MG1363)).